Consider the following 539-residue polypeptide: CTP synthase (539 aa).

The tract at residues 1-269 (MSATKYIFVT…DERVLSKLKL (269 aa)) is amidoligase domain. Residue serine 15 coordinates CTP. Residue serine 15 coordinates UTP. 16 to 21 (SLGKGI) is a binding site for ATP. Tyrosine 56 serves as a coordination point for L-glutamine. Aspartate 73 is a binding site for ATP. Aspartate 73 and glutamate 143 together coordinate Mg(2+). CTP contacts are provided by residues 150-152 (DIE), 190-195 (KTKPTQ), and lysine 226. Residues 190–195 (KTKPTQ) and lysine 226 each bind UTP. Residues 295–537 (NIALVGKYVE…VKAANDFAKG (243 aa)) form the Glutamine amidotransferase type-1 domain. Glycine 357 is an L-glutamine binding site. Cysteine 384 (nucleophile; for glutamine hydrolysis) is an active-site residue. L-glutamine contacts are provided by residues 385-388 (LGMQ), glutamate 408, and arginine 465. Active-site residues include histidine 510 and glutamate 512.

It belongs to the CTP synthase family. In terms of assembly, homotetramer.

It catalyses the reaction UTP + L-glutamine + ATP + H2O = CTP + L-glutamate + ADP + phosphate + 2 H(+). It carries out the reaction L-glutamine + H2O = L-glutamate + NH4(+). The enzyme catalyses UTP + NH4(+) + ATP = CTP + ADP + phosphate + 2 H(+). Its pathway is pyrimidine metabolism; CTP biosynthesis via de novo pathway; CTP from UDP: step 2/2. With respect to regulation, allosterically activated by GTP, when glutamine is the substrate; GTP has no effect on the reaction when ammonia is the substrate. The allosteric effector GTP functions by stabilizing the protein conformation that binds the tetrahedral intermediate(s) formed during glutamine hydrolysis. Inhibited by the product CTP, via allosteric rather than competitive inhibition. Functionally, catalyzes the ATP-dependent amination of UTP to CTP with either L-glutamine or ammonia as the source of nitrogen. Regulates intracellular CTP levels through interactions with the four ribonucleotide triphosphates. This chain is CTP synthase, found in Cytophaga hutchinsonii (strain ATCC 33406 / DSM 1761 / CIP 103989 / NBRC 15051 / NCIMB 9469 / D465).